A 553-amino-acid chain; its full sequence is Glucose-6-phosphate isomerase (553 aa).

Glu357 serves as the catalytic Proton donor. Catalysis depends on residues His388 and Lys514. The segment at Ala527–Ala553 is disordered. The span at Leu541 to Ala553 shows a compositional bias: basic and acidic residues.

This sequence belongs to the GPI family.

The protein resides in the cytoplasm. The catalysed reaction is alpha-D-glucose 6-phosphate = beta-D-fructose 6-phosphate. It participates in carbohydrate biosynthesis; gluconeogenesis. The protein operates within carbohydrate degradation; glycolysis; D-glyceraldehyde 3-phosphate and glycerone phosphate from D-glucose: step 2/4. Catalyzes the reversible isomerization of glucose-6-phosphate to fructose-6-phosphate. This chain is Glucose-6-phosphate isomerase, found in Mycolicibacterium vanbaalenii (strain DSM 7251 / JCM 13017 / BCRC 16820 / KCTC 9966 / NRRL B-24157 / PYR-1) (Mycobacterium vanbaalenii).